The chain runs to 433 residues: Probable D-serine dehydratase (433 aa).

Lys-110 carries the N6-(pyridoxal phosphate)lysine modification.

Belongs to the serine/threonine dehydratase family. DsdA subfamily. It depends on pyridoxal 5'-phosphate as a cofactor.

It catalyses the reaction D-serine = pyruvate + NH4(+). The chain is Probable D-serine dehydratase from Oenococcus oeni (strain ATCC BAA-331 / PSU-1).